A 177-amino-acid chain; its full sequence is 18.9 kDa heat shock protein (177 aa).

Positions 1–35 (MSMITSMLGRKQNAQQKGGGGGGRTGGGGGGEIEP) are disordered. Over residues 17 to 32 (KGGGGGGRTGGGGGGE) the composition is skewed to gly residues. The sHSP domain occupies 63-177 (AAGVPSTASM…PHARIIPITN (115 aa)).

It belongs to the small heat shock protein (HSP20) family. As to quaternary structure, may form oligomeric structures.

The protein localises to the cytoplasm. In Oryza sativa subsp. japonica (Rice), this protein is 18.9 kDa heat shock protein (HSP18.9).